The chain runs to 429 residues: Phosphoribosylamine--glycine ligase (429 aa).

One can recognise an ATP-grasp domain in the interval 109–316; the sequence is KDFLARHHIP…LVELCLAACD (208 aa). 135–196 contacts ATP; sequence LREKGAPIVV…EEFLDGEEAS (62 aa). The tract at residues 209–231 is disordered; the sequence is MATSQDHKRVGENDTGLNTGGMG. Residues Glu286 and Asn288 each coordinate Mg(2+).

This sequence belongs to the GARS family. Mg(2+) serves as cofactor. Requires Mn(2+) as cofactor.

The enzyme catalyses 5-phospho-beta-D-ribosylamine + glycine + ATP = N(1)-(5-phospho-beta-D-ribosyl)glycinamide + ADP + phosphate + H(+). Its pathway is purine metabolism; IMP biosynthesis via de novo pathway; N(1)-(5-phospho-D-ribosyl)glycinamide from 5-phospho-alpha-D-ribose 1-diphosphate: step 2/2. This Pasteurella multocida (strain Pm70) protein is Phosphoribosylamine--glycine ligase.